Reading from the N-terminus, the 146-residue chain is Acidic phospholipase A2 C (146 aa).

A signal peptide spans 1–21 (MNPAHLLILAAVCVSPLGASS). Positions 22 to 27 (NRPMPL) are excised as a propeptide. Cystine bridges form between Cys-38/Cys-98, Cys-53/Cys-145, Cys-55/Cys-71, Cys-70/Cys-126, Cys-77/Cys-119, Cys-87/Cys-112, and Cys-105/Cys-117. Positions 54, 56, and 58 each coordinate Ca(2+). The active site involves His-74. Asp-75 is a Ca(2+) binding site. Residue Asp-120 is part of the active site.

This sequence belongs to the phospholipase A2 family. Group I subfamily. D49 sub-subfamily. It depends on Ca(2+) as a cofactor. Expressed by the venom gland.

Its subcellular location is the secreted. The catalysed reaction is a 1,2-diacyl-sn-glycero-3-phosphocholine + H2O = a 1-acyl-sn-glycero-3-phosphocholine + a fatty acid + H(+). Functionally, PLA2 catalyzes the calcium-dependent hydrolysis of the 2-acyl groups in 3-sn-phosphoglycerides. The sequence is that of Acidic phospholipase A2 C from Naja sputatrix (Malayan spitting cobra).